We begin with the raw amino-acid sequence, 102 residues long: Small ribosomal subunit protein uS10 (102 aa).

The protein belongs to the universal ribosomal protein uS10 family. As to quaternary structure, part of the 30S ribosomal subunit.

Functionally, involved in the binding of tRNA to the ribosomes. The chain is Small ribosomal subunit protein uS10 from Exiguobacterium sibiricum (strain DSM 17290 / CCUG 55495 / CIP 109462 / JCM 13490 / 255-15).